Here is a 473-residue protein sequence, read N- to C-terminus: Photosystem II CP43 reaction center protein (473 aa).

A propeptide spanning residues 1-14 is cleaved from the precursor; it reads MKTLYSLRRFYHVE. The residue at position 15 (T15) is an N-acetylthreonine. A Phosphothreonine modification is found at T15. 5 helical membrane-spanning segments follow: residues 69–93, 134–155, 178–200, 255–275, and 291–312; these read LFEV…PHLA, LLGP…KDRN, KALY…RKIT, KPFA…LSYS, and WFNN…ASQA. E367 serves as a coordination point for [CaMn4O5] cluster. Residues 447 to 471 traverse the membrane as a helical segment; the sequence is RARAAAAGFEKGIDRDFEPVLFMTP.

The protein belongs to the PsbB/PsbC family. PsbC subfamily. PSII is composed of 1 copy each of membrane proteins PsbA, PsbB, PsbC, PsbD, PsbE, PsbF, PsbH, PsbI, PsbJ, PsbK, PsbL, PsbM, PsbT, PsbX, PsbY, PsbZ, Psb30/Ycf12, at least 3 peripheral proteins of the oxygen-evolving complex and a large number of cofactors. It forms dimeric complexes. It depends on Binds multiple chlorophylls and provides some of the ligands for the Ca-4Mn-5O cluster of the oxygen-evolving complex. It may also provide a ligand for a Cl- that is required for oxygen evolution. PSII binds additional chlorophylls, carotenoids and specific lipids. as a cofactor.

The protein resides in the plastid. Its subcellular location is the chloroplast thylakoid membrane. One of the components of the core complex of photosystem II (PSII). It binds chlorophyll and helps catalyze the primary light-induced photochemical processes of PSII. PSII is a light-driven water:plastoquinone oxidoreductase, using light energy to abstract electrons from H(2)O, generating O(2) and a proton gradient subsequently used for ATP formation. The protein is Photosystem II CP43 reaction center protein of Solanum tuberosum (Potato).